Reading from the N-terminus, the 373-residue chain is Mitochondrial nicotinamide adenine dinucleotide transporter 1 (373 aa).

The Mitochondrial matrix portion of the chain corresponds to 1–80 (MTQTDNPVPN…WVPLSSTQIT (80 aa)). Solcar repeat units lie at residues 75-166 (SSTQ…SKKF), 174-263 (FDFV…LKVR), and 276-364 (INLQ…FRNR). Residues 81 to 101 (ALSGAFAGFLSGVAVCPLDVA) traverse the membrane as a helical segment. Over 102–141 (KTRLQAQGLQTRFENPYYRGIMGTLSTIVRDEGPRGLYKG) the chain is Mitochondrial intermembrane. A helical membrane pass occupies residues 142 to 162 (LVPIVLGYFPTWMIYFSVYEF). The Mitochondrial matrix portion of the chain corresponds to 163 to 176 (SKKFFHGIFPQFDF). The chain crosses the membrane as a helical span at residues 177-199 (VAQSCAAITAGAASTTLTNPIWV). At 200-235 (VKTRLMLQSNLGEHPTHYKGTFDAFRKLFYQEGFKA) the chain is on the mitochondrial intermembrane side. The helical transmembrane segment at 236–256 (LYAGLVPSLLGLFHVAIHFPI) threads the bilayer. At 257–280 (YEDLKVRFHCYSRENNTNSINLQR) the chain is on the mitochondrial matrix side. The helical transmembrane segment at 281–297 (LIMASSVSKMIASAVTY) threads the bilayer. Topologically, residues 298-335 (PHEILRTRMQLKSDIPDSIQRRLFPLIKATYAQEGLKG) are mitochondrial intermembrane. A helical membrane pass occupies residues 336–358 (FYSGFTTNLVRTIPASAITLVSF). Topologically, residues 359-373 (EYFRNRLENISTMVI) are mitochondrial matrix.

This sequence belongs to the mitochondrial carrier (TC 2.A.29) family.

The protein resides in the mitochondrion inner membrane. It catalyses the reaction dAMP(in) + NAD(+)(out) = dAMP(out) + NAD(+)(in). The enzyme catalyses dGMP(in) + NAD(+)(out) = dGMP(out) + NAD(+)(in). The catalysed reaction is GMP(in) + NAD(+)(out) = GMP(out) + NAD(+)(in). It carries out the reaction AMP(in) + NAD(+)(out) = AMP(out) + NAD(+)(in). It catalyses the reaction deamido-NAD(+)(in) + NAD(+)(out) = deamido-NAD(+)(out) + NAD(+)(in). Functionally, mitochondrial inner membrane carrier protein that mediates the import of NAD(+) into mitochondria. Can transport NAD(+) by unidirectional transport or by exchange with intramitochondrially generated dAMP and dGMP. Also able to transport NAD(+) by exchange with AMP, GMP or deamido-NAD (+) in vitro. The sequence is that of Mitochondrial nicotinamide adenine dinucleotide transporter 1 (YIA6) from Saccharomyces cerevisiae (strain ATCC 204508 / S288c) (Baker's yeast).